The sequence spans 366 residues: DNA replication and repair protein RecF (366 aa).

30 to 37 is an ATP binding site; it reads GDNGMGKT.

Belongs to the RecF family.

Its subcellular location is the cytoplasm. The RecF protein is involved in DNA metabolism; it is required for DNA replication and normal SOS inducibility. RecF binds preferentially to single-stranded, linear DNA. It also seems to bind ATP. The chain is DNA replication and repair protein RecF from Azobacteroides pseudotrichonymphae genomovar. CFP2.